Consider the following 468-residue polypeptide: UDP-N-acetylmuramoylalanine--D-glutamate ligase (468 aa).

127 to 133 lines the ATP pocket; the sequence is GTNGKTT.

It belongs to the MurCDEF family.

It is found in the cytoplasm. It catalyses the reaction UDP-N-acetyl-alpha-D-muramoyl-L-alanine + D-glutamate + ATP = UDP-N-acetyl-alpha-D-muramoyl-L-alanyl-D-glutamate + ADP + phosphate + H(+). Its pathway is cell wall biogenesis; peptidoglycan biosynthesis. Its function is as follows. Cell wall formation. Catalyzes the addition of glutamate to the nucleotide precursor UDP-N-acetylmuramoyl-L-alanine (UMA). The protein is UDP-N-acetylmuramoylalanine--D-glutamate ligase of Prochlorococcus marinus (strain MIT 9312).